We begin with the raw amino-acid sequence, 377 residues long: Peroxisomal membrane protein PEX14 (377 aa).

The segment covering 1-15 (MASSEQAEQPSQPSS) has biased composition (low complexity). Positions 1–24 (MASSEQAEQPSQPSSTPGSENVLP) are disordered. Ala-2 carries the N-acetylalanine modification. Over 2–108 (ASSEQAEQPS…YSPAGSRWRD (107 aa)) the chain is Peroxisomal matrix. Lys-34 bears the N6-acetyllysine mark. The helical transmembrane segment at 109–126 (YGALAIIMAGIAFGFHQL) threads the bilayer. Over 127-377 (YKKYLLPLIL…EGASNESERD (251 aa)) the chain is Cytoplasmic. The disordered stretch occupies residues 230-377 (PPSPSAPKIP…EGASNESERD (148 aa)). Ser-232 carries the phosphoserine modification. Low complexity-rich tracts occupy residues 244–259 (PVKS…VNHH) and 265–275 (SPVSNESTSSS). Ser-282 and Ser-335 each carry phosphoserine. Positions 323–342 (KEDEEDEEDDDVSHVDEEDC) are enriched in acidic residues. A compositionally biased stretch (basic and acidic residues) spans 360–377 (QVEKLRRPEGASNESERD).

It belongs to the peroxin-14 family. In terms of assembly, interacts with PEX13; forming the PEX13-PEX14 docking complex. Interacts with PEX5 (via WxxxF/Y motifs). Interacts with PEX19. Interacts with tubulin.

Its subcellular location is the peroxisome membrane. Functionally, component of the PEX13-PEX14 docking complex, a translocon channel that specifically mediates the import of peroxisomal cargo proteins bound to PEX5 receptor. The PEX13-PEX14 docking complex forms a large import pore which can be opened to a diameter of about 9 nm. Mechanistically, PEX5 receptor along with cargo proteins associates with the PEX14 subunit of the PEX13-PEX14 docking complex in the cytosol, leading to the insertion of the receptor into the organelle membrane with the concomitant translocation of the cargo into the peroxisome matrix. Plays a key role for peroxisome movement through a direct interaction with tubulin. This chain is Peroxisomal membrane protein PEX14, found in Homo sapiens (Human).